A 180-amino-acid polypeptide reads, in one-letter code: uncharacterized protein (180 aa).

The stretch at 114–147 (EDIYEDIVDVRLENQSLEEQLEDFKECSRALKKY) forms a coiled coil.

Belongs to the mimivirus L74/L77/R857 family.

This is an uncharacterized protein from Acanthamoeba polyphaga mimivirus (APMV).